We begin with the raw amino-acid sequence, 1153 residues long: ATP-dependent helicase/deoxyribonuclease subunit B (1153 aa).

8-15 is an ATP binding site; that stretch reads GRAGSGKS. Residues Cys-786, Cys-1104, Cys-1107, and Cys-1113 each coordinate [4Fe-4S] cluster.

This sequence belongs to the helicase family. AddB/RexB type 1 subfamily. Heterodimer of AddA and AddB. Requires Mg(2+) as cofactor. [4Fe-4S] cluster is required as a cofactor.

Its function is as follows. The heterodimer acts as both an ATP-dependent DNA helicase and an ATP-dependent, dual-direction single-stranded exonuclease. Recognizes the chi site generating a DNA molecule suitable for the initiation of homologous recombination. The AddB subunit has 5' -&gt; 3' nuclease activity but not helicase activity. The sequence is that of ATP-dependent helicase/deoxyribonuclease subunit B from Clostridium acetobutylicum (strain ATCC 824 / DSM 792 / JCM 1419 / IAM 19013 / LMG 5710 / NBRC 13948 / NRRL B-527 / VKM B-1787 / 2291 / W).